We begin with the raw amino-acid sequence, 244 residues long: L-xylulose reductase (244 aa).

N-acetylmethionine is present on Met-1. NADP(+) is bound at residue 11-40 (LVTGAGKGIGRGTVQALHATGARVVAVSRT). The residue at position 21 (Arg-21) is an Omega-N-methylarginine. Position 46 is a phosphoserine (Ser-46). Residue Ser-136 coordinates substrate. Tyr-149 (proton acceptor) is an active-site residue. Lys-153 provides a ligand contact to NADP(+).

The protein belongs to the short-chain dehydrogenases/reductases (SDR) family. As to quaternary structure, homotetramer. Highly expressed in kidney, liver and epididymis. In the epididymis, it is mainly expressed in the proximal and distal sections of the corpus region. Weakly or not expressed in brain, lung, heart, spleen and testis.

It is found in the membrane. It catalyses the reaction xylitol + NADP(+) = L-xylulose + NADPH + H(+). Its function is as follows. Catalyzes the NADPH-dependent reduction of several pentoses, tetroses, trioses, alpha-dicarbonyl compounds and L-xylulose. Participates in the uronate cycle of glucose metabolism. May play a role in the water absorption and cellular osmoregulation in the proximal renal tubules by producing xylitol, an osmolyte, thereby preventing osmolytic stress from occurring in the renal tubules. This chain is L-xylulose reductase (DCXR), found in Homo sapiens (Human).